Consider the following 374-residue polypeptide: Cysteine-type anaerobic sulfatase-maturating enzyme (374 aa).

Residues 1-227 (MKSLSMLIKP…LNKLFDLWFK (227 aa)) enclose the Radical SAM core domain. [4Fe-4S] cluster is bound by residues Cys-15 and Cys-19. Residue Tyr-21 participates in S-adenosyl-L-methionine binding. Cys-22 serves as a coordination point for [4Fe-4S] cluster. S-adenosyl-L-methionine is bound by residues Gly-66, Ser-122, Arg-134, and Leu-195. 3 residues coordinate [4Fe-4S] cluster: Cys-255, Cys-261, and Cys-276. The active-site Proton acceptor is Asp-277. 5 residues coordinate [4Fe-4S] cluster: Cys-317, Cys-320, Cys-326, Cys-330, and Cys-348.

Belongs to the radical SAM superfamily. Anaerobic sulfatase-maturating enzyme family. The cofactor is [4Fe-4S] cluster.

The catalysed reaction is L-cysteinyl-[sulfatase] + S-adenosyl-L-methionine + H2O = 3-oxo-L-alanyl-[sulfatase] + hydrogen sulfide + 5'-deoxyadenosine + L-methionine + 2 H(+). It functions in the pathway protein modification; sulfatase oxidation. Involved in 'Cys-type' sulfatase maturation under anaerobic conditions. Catalyzes the post-translational modification of cysteine into 3-oxoalanine (also known as C(alpha)-formylglycine (FGly)), by a free radical chemical mechanism initiated via the reductive cleavage of S-adenosyl-L-methionine (SAM). This is Cysteine-type anaerobic sulfatase-maturating enzyme from Clostridium novyi (strain NT).